A 464-amino-acid chain; its full sequence is ERO1-like protein alpha (464 aa).

The N-terminal stretch at 1 to 23 is a signal peptide; that stretch reads MGRAWGLLVGLLGVVWLLRLGHG. 8 disulfide bridges follow: Cys35–Cys48, Cys37–Cys46, Cys85–Cys387, Cys94–Cys99, Cys94–Cys130, Cys99–Cys104, Cys207–Cys237, and Cys390–Cys393. 3 positions are modified to phosphoserine: Ser106, Ser142, and Ser144. The FAD site is built by Arg186, Thr188, and Trp199. Residues Ser248 and His251 each coordinate FAD. Asn276 is a glycosylation site (N-linked (GlcNAc...) asparagine). Arg283 and Arg296 together coordinate FAD. The N-linked (GlcNAc...) asparagine glycan is linked to Asn380.

It belongs to the EROs family. Predominantly monomer. May function both as a monomer and a homodimer. Interacts with PDILT. Interacts with ERP44; the interaction results in retention of ERO1A in the endoplasmic reticulum. Requires FAD as cofactor. In terms of processing, N-glycosylated. The Cys-94/Cys-99 and Cys-390/Cys-393 disulfide bonds constitute the redox-active center. The Cys-94/Cys-99 disulfide bond may accept electron from P4HB and funnel them to the active site disulfide Cys-390/Cys-393. The regulatory Cys-99/Cys-104 disulfide bond stabilizes the other regulatory bond Cys-94/Cys-130. Post-translationally, phosphorylated on Ser-144 by FAM20C in the Golgi which increases its enzymatic activity. Phosphorylation is induced by lactation. It is also induced by hypoxia and reductive stress. In terms of tissue distribution, widely expressed (at protein level). In the mammary gland, expressed at higher levels in lactating mice than in virgin mice (at protein level).

The protein localises to the endoplasmic reticulum membrane. It is found in the golgi apparatus lumen. The protein resides in the secreted. Its subcellular location is the cell projection. It localises to the dendrite. With respect to regulation, enzyme activity is tightly regulated to prevent the accumulation of reactive oxygen species in the endoplasmic reticulum. Reversibly down-regulated by the formation of disulfide bonds between the active site Cys-94 and Cys-130, and between Cys-99 and Cys-104. Glutathione may be required to regulate its activity in the endoplasmic reticulum. Oxidoreductase involved in disulfide bond formation in the endoplasmic reticulum. Efficiently reoxidizes P4HB/PDI, the enzyme catalyzing protein disulfide formation, in order to allow P4HB to sustain additional rounds of disulfide formation. Following P4HB reoxidation, passes its electrons to molecular oxygen via FAD, leading to the production of reactive oxygen species (ROS) in the cell. Required for the proper folding of immunoglobulins. Plays an important role in ER stress-induced, CHOP-dependent apoptosis by activating the inositol 1,4,5-trisphosphate receptor IP3R1. The chain is ERO1-like protein alpha from Mus musculus (Mouse).